A 101-amino-acid polypeptide reads, in one-letter code: Small ribosomal subunit protein uS14 (101 aa).

Belongs to the universal ribosomal protein uS14 family. Part of the 30S ribosomal subunit. Contacts proteins S3 and S10.

Functionally, binds 16S rRNA, required for the assembly of 30S particles and may also be responsible for determining the conformation of the 16S rRNA at the A site. This is Small ribosomal subunit protein uS14 from Shewanella woodyi (strain ATCC 51908 / MS32).